Here is an 82-residue protein sequence, read N- to C-terminus: Antitoxin MazE8 (82 aa).

As to quaternary structure, forms a complex with cognate toxin MazF8.

Its function is as follows. Antitoxin component of a type II toxin-antitoxin (TA) system. Its cognate toxin is MazF8. In Mycobacterium tuberculosis (strain ATCC 25618 / H37Rv), this protein is Antitoxin MazE8 (mazE8).